Consider the following 125-residue polypeptide: Succinate dehydrogenase assembly factor 3, mitochondrial (125 aa).

A mitochondrion-targeting transit peptide spans M1–L42.

This sequence belongs to the complex I LYR family. SDHAF3 subfamily. In terms of assembly, interacts with the iron-sulfur protein subunit within the SDH catalytic dimer.

It is found in the mitochondrion matrix. Plays an essential role in the assembly of succinate dehydrogenase (SDH), an enzyme complex (also referred to as respiratory complex II) that is a component of both the tricarboxylic acid (TCA) cycle and the mitochondrial electron transport chain, and which couples the oxidation of succinate to fumarate with the reduction of ubiquinone (coenzyme Q) to ubiquinol. Promotes maturation of the iron-sulfur protein subunit of the SDH catalytic dimer, protecting it from the deleterious effects of oxidants. May act together with SDHAF1. The polypeptide is Succinate dehydrogenase assembly factor 3, mitochondrial (Eremothecium gossypii (strain ATCC 10895 / CBS 109.51 / FGSC 9923 / NRRL Y-1056) (Yeast)).